Consider the following 530-residue polypeptide: MEPRAVADALETGEEDVVMEALRAYNRENSQSFTFDDAQQEDRKRLAKLLVSVLEQGLPPSRRVIWLQSIRILSRDRSCLDSFTSRRSLQALACYAGISASQGSVPEPLNMDVVLESLKCLCNLVLSSPVAQALAAEAGLVVRLAERVGLCRQSSFPHDVQFFDLRLLFLLTALRTDVRQQLFQELQGVRLLTRALELTLGMTEGERHPELLPPQETERAMEILKVLFNITFDSIKREVDEEDAALYRHLGTLLRHCVMLAAAGDRTEELHGHAVNLLGNLPVKCLDVLLTLEPHEGSLEFLGVNMDVIRVLLSFMEKRLHQTHRLKESVAPVLSVLTECARMHRPARKFLKAQVLPPLRDVRTRPEVGELLRNKLVRLMTHLDTDVKRVAAEFLFVLCSESVPRFIKYTGYGNAAGLLAARGLMAGGRPEGQYSEDEDTDTDEYKEAKASINPVTGRVEEKPPNPMEGMTEEQKEHEAMKLVNMFDKLSRHRVIQPMGMSPRGQLTSLQDAMCETMEGQLSSDPDSDPD.

Ser-435 is subject to Phosphoserine. Thr-440 and Thr-442 each carry phosphothreonine. Phosphoserine is present on residues Ser-501, Ser-522, Ser-523, and Ser-527.

Belongs to the synembryn family. As to quaternary structure, interacts with GDP-bound G alpha proteins GNAI1, GNAO1 and GNAQ, and with GNA13 with lower affinity. Does not interact with G-alpha proteins when they are in complex with subunits beta and gamma. Interacts (via C-terminus) with RGS14; the interaction stimulates the dissociation of the complex between RGS14 and the active GTP-bound form of GNAI1. Interacts with NCS1; interaction is favored in the absence of Ca(2+) and myristoylation of NCS1 is not required. Phosphorylated at Ser-435 and Thr-440 by CK2, stabilizing its interface with G alpha proteins.

It localises to the cytoplasm. The protein resides in the cell cortex. Its function is as follows. Chaperone that specifically binds and folds nascent G alpha proteins prior to G protein heterotrimer formation, promoting their stability and activity: folds GNAI1, GNAO1, GNA13 and GNAQ. Does not fold G(s) G-alpha proteins GNAS nor GNAL. Also acts as a guanine nucleotide exchange factor (GEF) for G alpha proteins by stimulating exchange of bound GDP for free GTP. Involved in regulation of microtubule pulling forces during mitotic movement of chromosomes by stimulating G(i)-alpha protein (GNAI1), possibly leading to release G(i)-alpha-GTP and NuMA proteins from the NuMA-GPSM2-G(i)-alpha-GDP complex. Also acts as an activator for G(q)-alpha (GNAQ) protein by enhancing the G(q)-coupled receptor-mediated ERK activation. This Bos taurus (Bovine) protein is Chaperone Ric-8A (RIC8A).